The chain runs to 427 residues: Serine--tRNA ligase (427 aa).

Residue 236–238 (TAE) coordinates L-serine. 267-269 (RRE) lines the ATP pocket. Glutamate 290 contributes to the L-serine binding site. Position 354-357 (354-357 (EISS)) interacts with ATP. Residue serine 390 coordinates L-serine.

The protein belongs to the class-II aminoacyl-tRNA synthetase family. Type-1 seryl-tRNA synthetase subfamily. As to quaternary structure, homodimer. The tRNA molecule binds across the dimer.

The protein resides in the cytoplasm. The catalysed reaction is tRNA(Ser) + L-serine + ATP = L-seryl-tRNA(Ser) + AMP + diphosphate + H(+). It carries out the reaction tRNA(Sec) + L-serine + ATP = L-seryl-tRNA(Sec) + AMP + diphosphate + H(+). It participates in aminoacyl-tRNA biosynthesis; selenocysteinyl-tRNA(Sec) biosynthesis; L-seryl-tRNA(Sec) from L-serine and tRNA(Sec): step 1/1. Catalyzes the attachment of serine to tRNA(Ser). Is also able to aminoacylate tRNA(Sec) with serine, to form the misacylated tRNA L-seryl-tRNA(Sec), which will be further converted into selenocysteinyl-tRNA(Sec). This chain is Serine--tRNA ligase, found in Picosynechococcus sp. (strain ATCC 27264 / PCC 7002 / PR-6) (Agmenellum quadruplicatum).